The following is a 282-amino-acid chain: Ribosomal protein L11 methyltransferase (282 aa).

Residues T133, G154, D175, and N216 each contribute to the S-adenosyl-L-methionine site.

The protein belongs to the methyltransferase superfamily. PrmA family.

The protein localises to the cytoplasm. It catalyses the reaction L-lysyl-[protein] + 3 S-adenosyl-L-methionine = N(6),N(6),N(6)-trimethyl-L-lysyl-[protein] + 3 S-adenosyl-L-homocysteine + 3 H(+). Its function is as follows. Methylates ribosomal protein L11. The sequence is that of Ribosomal protein L11 methyltransferase from Campylobacter jejuni subsp. doylei (strain ATCC BAA-1458 / RM4099 / 269.97).